Consider the following 395-residue polypeptide: Indoleacetate--lysine synthetase (395 aa).

Belongs to the ATP-dependent AMP-binding enzyme family.

The catalysed reaction is (indol-3-yl)acetate + L-lysine + ATP = N(6)-[(indole-3-yl)acetyl]-L-lysine + ADP + phosphate + H(+). In terms of biological role, conversion of IAA to IAA-lysine. In Pseudomonas savastanoi (Pseudomonas syringae pv. savastanoi), this protein is Indoleacetate--lysine synthetase (iaaL).